The sequence spans 205 residues: Thiamine-phosphate synthase (205 aa).

4-amino-2-methyl-5-(diphosphooxymethyl)pyrimidine-binding positions include Q37 to K41 and N69. Residues D70 and D89 each contribute to the Mg(2+) site. 4-amino-2-methyl-5-(diphosphooxymethyl)pyrimidine is bound at residue S108. A 2-[(2R,5Z)-2-carboxy-4-methylthiazol-5(2H)-ylidene]ethyl phosphate-binding site is contributed by T134–S136. Residue K137 coordinates 4-amino-2-methyl-5-(diphosphooxymethyl)pyrimidine. Residues G165 and I185–S186 contribute to the 2-[(2R,5Z)-2-carboxy-4-methylthiazol-5(2H)-ylidene]ethyl phosphate site.

The protein belongs to the thiamine-phosphate synthase family. Mg(2+) serves as cofactor.

It carries out the reaction 2-[(2R,5Z)-2-carboxy-4-methylthiazol-5(2H)-ylidene]ethyl phosphate + 4-amino-2-methyl-5-(diphosphooxymethyl)pyrimidine + 2 H(+) = thiamine phosphate + CO2 + diphosphate. It catalyses the reaction 2-(2-carboxy-4-methylthiazol-5-yl)ethyl phosphate + 4-amino-2-methyl-5-(diphosphooxymethyl)pyrimidine + 2 H(+) = thiamine phosphate + CO2 + diphosphate. The catalysed reaction is 4-methyl-5-(2-phosphooxyethyl)-thiazole + 4-amino-2-methyl-5-(diphosphooxymethyl)pyrimidine + H(+) = thiamine phosphate + diphosphate. Its pathway is cofactor biosynthesis; thiamine diphosphate biosynthesis; thiamine phosphate from 4-amino-2-methyl-5-diphosphomethylpyrimidine and 4-methyl-5-(2-phosphoethyl)-thiazole: step 1/1. In terms of biological role, condenses 4-methyl-5-(beta-hydroxyethyl)thiazole monophosphate (THZ-P) and 2-methyl-4-amino-5-hydroxymethyl pyrimidine pyrophosphate (HMP-PP) to form thiamine monophosphate (TMP). This chain is Thiamine-phosphate synthase, found in Clostridium botulinum (strain Kyoto / Type A2).